Reading from the N-terminus, the 516-residue chain is Poly(U)-binding-splicing factor PUF60-B (516 aa).

2 consecutive RRM domains span residues 86 to 164 (CRVY…RPGS) and 183 to 261 (NRIY…KAVT). Positions 356–398 (TAPASMGTPTSAVQLHTEVKREEDSRRTAEDHSAPVGNGQDSE) are disordered. Residues 372–388 (TEVKREEDSRRTAEDHS) are compositionally biased toward basic and acidic residues. Residues 419 to 506 (TVMVLRNMVG…RKVVAELYDQ (88 aa)) form the RRM 3; atypical domain.

The protein belongs to the RRM half pint family.

The protein resides in the nucleus. In terms of biological role, DNA- and RNA-binding protein, involved in transcription repression and pre-mRNA splicing. This is Poly(U)-binding-splicing factor PUF60-B (puf60b) from Danio rerio (Zebrafish).